The chain runs to 122 residues: UPF0102 protein MUL_2060 (122 aa).

This sequence belongs to the UPF0102 family.

The sequence is that of UPF0102 protein MUL_2060 from Mycobacterium ulcerans (strain Agy99).